A 346-amino-acid polypeptide reads, in one-letter code: 3-dehydroquinate synthase (346 aa).

NAD(+)-binding positions include 61–66 (DGEAYK), 95–99 (GVIGD), 119–120 (TT), Lys-132, and Lys-141. Zn(2+) contacts are provided by Glu-174, His-233, and His-250.

This sequence belongs to the sugar phosphate cyclases superfamily. Dehydroquinate synthase family. The cofactor is NAD(+). Co(2+) serves as cofactor. Zn(2+) is required as a cofactor.

It localises to the cytoplasm. It carries out the reaction 7-phospho-2-dehydro-3-deoxy-D-arabino-heptonate = 3-dehydroquinate + phosphate. It functions in the pathway metabolic intermediate biosynthesis; chorismate biosynthesis; chorismate from D-erythrose 4-phosphate and phosphoenolpyruvate: step 2/7. Catalyzes the conversion of 3-deoxy-D-arabino-heptulosonate 7-phosphate (DAHP) to dehydroquinate (DHQ). This is 3-dehydroquinate synthase from Wolinella succinogenes (strain ATCC 29543 / DSM 1740 / CCUG 13145 / JCM 31913 / LMG 7466 / NCTC 11488 / FDC 602W) (Vibrio succinogenes).